The primary structure comprises 292 residues: Pantothenate synthetase (292 aa).

30–37 contributes to the ATP binding site; that stretch reads MGFLHIGH. Histidine 37 acts as the Proton donor in catalysis. Residue glutamine 61 coordinates (R)-pantoate. Glutamine 61 is a beta-alanine binding site. An ATP-binding site is contributed by 147–150; that stretch reads GEKD. A (R)-pantoate-binding site is contributed by glutamine 153. ATP contacts are provided by residues valine 176 and 184–187; that span reads CSSR.

It belongs to the pantothenate synthetase family. Homodimer.

The protein localises to the cytoplasm. It catalyses the reaction (R)-pantoate + beta-alanine + ATP = (R)-pantothenate + AMP + diphosphate + H(+). It functions in the pathway cofactor biosynthesis; (R)-pantothenate biosynthesis; (R)-pantothenate from (R)-pantoate and beta-alanine: step 1/1. Catalyzes the condensation of pantoate with beta-alanine in an ATP-dependent reaction via a pantoyl-adenylate intermediate. This Agrobacterium fabrum (strain C58 / ATCC 33970) (Agrobacterium tumefaciens (strain C58)) protein is Pantothenate synthetase.